A 431-amino-acid polypeptide reads, in one-letter code: Dihydroorotase (431 aa).

2 residues coordinate Zn(2+): His55 and His57. Residues 57–59 (HFR) and Asn89 each bind substrate. Zn(2+) contacts are provided by Lys139, His169, His223, and Asp290. Lys139 carries the N6-carboxylysine modification. Asp290 is a catalytic residue. Substrate is bound by residues His294 and 308–309 (PG).

The protein belongs to the metallo-dependent hydrolases superfamily. DHOase family. Class I DHOase subfamily. Zn(2+) is required as a cofactor.

It carries out the reaction (S)-dihydroorotate + H2O = N-carbamoyl-L-aspartate + H(+). It functions in the pathway pyrimidine metabolism; UMP biosynthesis via de novo pathway; (S)-dihydroorotate from bicarbonate: step 3/3. Its function is as follows. Catalyzes the reversible cyclization of carbamoyl aspartate to dihydroorotate. The chain is Dihydroorotase from Methanothermobacter thermautotrophicus (strain ATCC 29096 / DSM 1053 / JCM 10044 / NBRC 100330 / Delta H) (Methanobacterium thermoautotrophicum).